The chain runs to 204 residues: Ras-related protein Rab-1D (204 aa).

GTP is bound by residues 17 to 25 (GDSGVGKSC), 35 to 42 (WTDTHIST), 65 to 69 (DTAGQ), 123 to 126 (NKTD), and 153 to 155 (SAK). Residues 39–47 (HISTIGVDF) carry the Effector region motif. The segment covering 182–191 (PKPDEVDIKS) has biased composition (basic and acidic residues). Residues 182–204 (PKPDEVDIKSKNKTKSGGKKSFC) form a disordered region. Basic residues predominate over residues 192 to 204 (KNKTKSGGKKSFC). Cysteine 204 carries S-geranylgeranyl cysteine lipidation.

This sequence belongs to the small GTPase superfamily. Rab family.

It localises to the cell membrane. This Dictyostelium discoideum (Social amoeba) protein is Ras-related protein Rab-1D (rab1D).